The primary structure comprises 444 residues: Putative zinc metalloprotease XF_1047 (444 aa).

His-22 serves as a coordination point for Zn(2+). The active site involves Glu-23. His-26 serves as a coordination point for Zn(2+). A helical transmembrane segment spans residues 98–120 (IAIVAAGPLANLLLCMLLLWVLF). Positions 192–276 (TLELSKLKQP…DGHPGMIEIR (85 aa)) constitute a PDZ domain. A run of 2 helical transmembrane segments spans residues 371–393 (VGWFIYFLSLLSLSLAIINLFPI) and 418–440 (AMAAGQYIGLALLAGLMGLAFYN).

It belongs to the peptidase M50B family. The cofactor is Zn(2+).

Its subcellular location is the cell inner membrane. This chain is Putative zinc metalloprotease XF_1047, found in Xylella fastidiosa (strain 9a5c).